Consider the following 483-residue polypeptide: Cyclic AMP-dependent transcription factor ATF-7 (483 aa).

Positions 1–285 (MGDDRPFVCN…GMVVGSASTM (285 aa)) are transactivation domain. The C2H2-type zinc-finger motif lies at 7–31 (FVCNAPGCGQRFTNEDHLAVHKHKH). Thr-51 carries the phosphothreonine; by MAPK11 modification. Phosphothreonine occurs at positions 53 and 101. Residue Lys-107 forms a Glycyl lysine isopeptide (Lys-Gly) (interchain with G-Cter in SUMO1) linkage. 2 disordered regions span residues 110–148 (EPVE…TPTP) and 299–345 (HPDA…NRAA). 2 stretches are compositionally biased toward low complexity: residues 114–126 (VDSS…ASSP) and 307–320 (QPQV…PSTG). The segment covering 326 to 343 (TVDEDPDERRQRFLERNR) has biased composition (basic and acidic residues). Positions 332–395 (DERRQRFLER…AQLKQLLLAH (64 aa)) constitute a bZIP domain. The basic motif stretch occupies residues 334-354 (RRQRFLERNRAAASRCRQKRK). Residues 360–388 (LEKKAEELTSQNIQLSNEVTLLRNEVAQL) form a leucine-zipper region. Disordered regions lie at residues 407–440 (TQGY…SNGL) and 464–483 (LSMP…SAGR). Phosphoserine occurs at positions 413 and 423. A compositionally biased stretch (polar residues) spans 429–440 (QHSSATAPSNGL).

Belongs to the bZIP family. As to quaternary structure, homodimer; binds DNA as homodimer. Heterodimer; heterodimerizes with other members of ATF family and with JUN family members. Interacts with JNK2; the interaction does not phosphorylate ATF7 but acts as a docking site for other ATF-associated partners such as JUN family members. Interacts (via its transactivation domain) with TAF12 (isoforms TAFII15 and TAFII20); the interaction potentiates the transactivation activity (isoform TAFII20 only) and is inhibited by ATF7 sumoylation. Interacts with TAF4; the interaction inhibits the TAF12-dependent transactivation. Interacts with MAPK9; the interaction does not phosphorylate ATF7 but acts as a docking site for ATF7-associated partners such as JUN. Interacts with Ku complex components XRCC6 and XRCC7. Interacts with TERT. On EGF stimulation, phosphorylated first on Thr-53 allowing subsequent phosphorylation on Thr-51. This latter phosphorylation prevents sumoylation, increases binding to TAF12 and enhances transcriptional activity. Social isolation stress as well as TNF-alpha also induce the phosphorylation of ATF7. Phosphorylated in proliferating colonic and small intestinal epithelial cells. Post-translationally, sumoylation delays nuclear localization and inhibits transactivation activity through preventing binding to TAF12. RANBP2 appears to be the specific E3 ligase.

It localises to the nucleus. The protein resides in the nucleoplasm. The protein localises to the chromosome. It is found in the telomere. In terms of biological role, stress-responsive chromatin regulator that plays a role in various biological processes including innate immunological memory, adipocyte differentiation or telomerase regulation. In absence of stress, contributes to the formation of heterochromatin and heterochromatin-like structure by recruiting histone H3K9 tri- and di-methyltransferases thus silencing the transcription of target genes such as STAT1 in adipocytes, or genes involved in innate immunity in macrophages and adipocytes. Stress induces ATF7 phosphorylation that disrupts interactions with histone methyltransferase and enhances the association with coactivators containing histone acetyltransferase and/or histone demethylase, leading to disruption of the heterochromatin-like structure and subsequently transcriptional activation. In response to TNF-alpha, which is induced by various stresses, phosphorylated ATF7 and telomerase are released from telomeres leading to telomere shortening. Plays also a role in maintaining epithelial regenerative capacity and protecting against cell death during intestinal epithelial damage and repair. This Pongo abelii (Sumatran orangutan) protein is Cyclic AMP-dependent transcription factor ATF-7 (ATF7).